A 1765-amino-acid chain; its full sequence is Sodium channel protein type 11 subunit alpha (1765 aa).

At 1 to 126 (MEERYYPVIF…PLRSLMIRIS (126 aa)) the chain is on the cytoplasmic side. Residues 115–403 (FNPLRSLMIR…VTMAYEEQNR (289 aa)) form an I repeat. Residues 127–148 (VHSVFSMFIICTVIINCMFMAN) form a helical membrane-spanning segment. Topologically, residues 149–157 (SMERSFDND) are extracellular. A helical membrane pass occupies residues 158 to 177 (IPEYVFIGIYILEAVIKILA). Residues 178-189 (RGFIVDEFSFLR) are Cytoplasmic-facing. Residues 190–209 (DPWNWLDFIVIGTAIATCFP) traverse the membrane as a helical segment. Residues 210–216 (GSQVNLS) are Extracellular-facing. N-linked (GlcNAc...) asparagine glycosylation occurs at asparagine 214. Residues 217–236 (ALRTFRVFRALKAISVISGL) form a helical; Voltage-sensor membrane-spanning segment. Over 237-252 (KVIVGALLRSVKKLVD) the chain is Cytoplasmic. A helical transmembrane segment spans residues 253-266 (VMVLTLFCLSIFAL). The Extracellular portion of the chain corresponds to 267–339 (VGQQLFMGIL…PDNNYTKFDN (73 aa)). Cysteines 280 and 317 form a disulfide. 2 N-linked (GlcNAc...) asparagine glycosylation sites follow: asparagine 319 and asparagine 333. Positions 340–364 (FGWSFLAMFRVMTQDSWERLYRQIL) form an intramembrane region, pore-forming. Residues 365–371 (RTSGIYF) lie on the Extracellular side of the membrane. Residues 372–397 (VFFFVVVIFLGSFYLLNLTLAVVTMA) form a helical membrane-spanning segment. Over 398–567 (YEEQNRNVAA…WLCIKKVLRT (170 aa)) the chain is Cytoplasmic. An II repeat occupies 554-820 (CSPQWLCIKK…EGETRKTKVQ (267 aa)). Residues 568-591 (IMTDPFTELAITICIIINTVFLAV) traverse the membrane as a helical segment. The Extracellular portion of the chain corresponds to 592-602 (EHHNMDDNLKT). Residues 603 to 626 (ILKIGNWVFTGIFIAEMCLKIIAL) form a helical membrane-spanning segment. At 627-634 (DPYHYFRH) the chain is on the cytoplasmic side. Residues 635–656 (GWNVFDSIVALLSLADVLYNTL) form a helical membrane-spanning segment. Topologically, residues 657 to 662 (SDNNRS) are extracellular. A glycan (N-linked (GlcNAc...) asparagine) is linked at asparagine 660. A helical; Voltage-sensor transmembrane segment spans residues 663–682 (FLASLRVLRVFKLAKSWPTL). Topologically, residues 683 to 697 (NTLIKIIGHSVGALG) are cytoplasmic. A helical membrane pass occupies residues 698-720 (NLTVVLTIVVFIFSVVGMRLFGT). The Extracellular segment spans residues 721-741 (KFNKTAYATQERPRRRWHMDN). Asparagine 723 carries an N-linked (GlcNAc...) asparagine glycan. Residues 742 to 762 (FYHSFLVVFRILCGEWIENMW) constitute an intramembrane region (pore-forming). The Extracellular segment spans residues 763–772 (GCMQDMDGSP). Cysteine 764 and cysteine 774 form a disulfide bridge. The helical transmembrane segment at 773-798 (LCIIVFVLIMVIGKLVVLNLFIALLL) threads the bilayer. The Cytoplasmic portion of the chain corresponds to 799–1029 (NSFSNEEKDG…WWNIRKTCYQ (231 aa)). The III repeat unit spans residues 1022-1319 (NIRKTCYQIV…KKYYNAMKKL (298 aa)). Residues 1030-1052 (IVKHSWFESFIIFVILLSSGALI) traverse the membrane as a helical segment. Residues 1053-1066 (FEDVNLPSRPQVEK) lie on the Extracellular side of the membrane. A helical transmembrane segment spans residues 1067–1092 (LLRCTDNIFTFIFLLEMILKWVAFGF). Residues 1093 to 1098 (RRYFTS) are Cytoplasmic-facing. Residues 1099 to 1116 (AWCWLDFLIVVVSVLSLM) traverse the membrane as a helical segment. Asparagine 1117 is a topological domain (extracellular). The chain crosses the membrane as a helical; Voltage-sensor span at residues 1118-1139 (LPSLKSFRTLRALRPLRALSQF). Residues 1140 to 1158 (EGMKVVVYALISAIPAILN) are Cytoplasmic-facing. Residues 1159 to 1180 (VLLVCLIFWLVFCILGVNLFSG) form a helical membrane-spanning segment. Over 1181–1223 (KFGRCINGTDINMYLDFTEVPNRSQCNISNYSWKVPQVNFDNV) the chain is Extracellular. Residues asparagine 1187, asparagine 1202, asparagine 1207, and asparagine 1210 are each glycosylated (N-linked (GlcNAc...) asparagine). The segment at residues 1224-1245 (GNAYLALLQVATYKGWLEIMNA) is an intramembrane region (pore-forming). The Extracellular portion of the chain corresponds to 1246–1261 (AVDSREKDEQPDFEAN). A helical membrane pass occupies residues 1262-1288 (LYAYLYFVVFIIFGSFFTLNLFIGVII). At 1289–1341 (DNFNQQQKKLGGQDIFMTEEQKKYYNAMKKLGTKKPQKPIPRPLNKCQAFVFD) the chain is on the cytoplasmic side. An IV repeat occupies 1328–1619 (IPRPLNKCQA…WEKFDPEASQ (292 aa)). Residues 1342 to 1365 (LVTSQVFDVIILGLIVLNMIIMMA) form a helical membrane-spanning segment. Residues 1366–1376 (ESADQPKDVKK) are Extracellular-facing. The chain crosses the membrane as a helical span at residues 1377–1400 (TFDILNIAFVVIFTIECLIKVFAL). At 1401–1406 (RQHYFT) the chain is on the cytoplasmic side. Residues 1407-1430 (NGWNLFDCVVVVLSIISTLVSRLE) form a helical membrane-spanning segment. At 1431–1440 (DSDISFPPTL) the chain is on the extracellular side. A helical; Voltage-sensor transmembrane segment spans residues 1441–1463 (FRVVRLARIGRILRLVRAARGIR). Topologically, residues 1464-1478 (TLLFALMMSLPSLFN) are cytoplasmic. The chain crosses the membrane as a helical span at residues 1479–1501 (IGLLLFLVMFIYAIFGMSWFSKV). Topologically, residues 1502 to 1515 (KKGSGIDDIFNFET) are extracellular. An intramembrane region (pore-forming) is located at residues 1516 to 1538 (FTGSMLCLFQITTSAGWDTLLNP). Topologically, residues 1539-1559 (MLEAKEHCNSSSQDSCQQPQI) are extracellular. An N-linked (GlcNAc...) asparagine glycan is attached at asparagine 1547. A helical transmembrane segment spans residues 1560–1584 (AVVYFVSYIIISFLIVVNMYIAVIL). Topologically, residues 1585–1765 (ENFNTATEES…DVAKVKVHND (181 aa)) are cytoplasmic.

This sequence belongs to the sodium channel (TC 1.A.1.10) family. Nav1.9/SCN11A subfamily. As to quaternary structure, the voltage-resistant sodium channel consists of an ion conducting pore forming alpha-subunit regulated by one or more auxiliary subunits SCN1B, SCN2B and SCN3B. In terms of tissue distribution, expressed (at protein level) in myenteric sensory neurons. Expressed in small sensory neurons of the dorsal root ganglia (C-fiber neurons) and trigeminal ganglia.

The protein resides in the cell membrane. It catalyses the reaction Na(+)(in) = Na(+)(out). With respect to regulation, activity is not sensitive to inhibition by tetrodotoxin. Sodium channel mediating the voltage-dependent sodium ion permeability of excitable membranes. Assuming opened or closed conformations in response to the voltage difference across the membrane, the protein forms a sodium-selective channel through which sodium ions may pass in accordance with their electrochemical gradient. Involved in membrane depolarization during action potential in nociceptors which function as key relay stations for the electrical transmission of pain signals from the periphery to the central nervous system. Also involved in rapid BDNF-evoked neuronal depolarization. The sequence is that of Sodium channel protein type 11 subunit alpha from Rattus norvegicus (Rat).